The following is a 162-amino-acid chain: 2-C-methyl-D-erythritol 2,4-cyclodiphosphate synthase (162 aa).

Residues Asp8 and His10 each contribute to the a divalent metal cation site. 4-CDP-2-C-methyl-D-erythritol 2-phosphate is bound by residues 8–10 (DVH) and 36–37 (HS). His44 serves as a coordination point for a divalent metal cation. Residues 58–60 (DIG), 63–67 (FPDTD), 102–108 (AQAPKMA), 134–137 (TTTE), Phe141, and Arg144 each bind 4-CDP-2-C-methyl-D-erythritol 2-phosphate.

It belongs to the IspF family. In terms of assembly, homotrimer. A divalent metal cation is required as a cofactor.

It catalyses the reaction 4-CDP-2-C-methyl-D-erythritol 2-phosphate = 2-C-methyl-D-erythritol 2,4-cyclic diphosphate + CMP. The protein operates within isoprenoid biosynthesis; isopentenyl diphosphate biosynthesis via DXP pathway; isopentenyl diphosphate from 1-deoxy-D-xylulose 5-phosphate: step 4/6. In terms of biological role, involved in the biosynthesis of isopentenyl diphosphate (IPP) and dimethylallyl diphosphate (DMAPP), two major building blocks of isoprenoid compounds. Catalyzes the conversion of 4-diphosphocytidyl-2-C-methyl-D-erythritol 2-phosphate (CDP-ME2P) to 2-C-methyl-D-erythritol 2,4-cyclodiphosphate (ME-CPP) with a corresponding release of cytidine 5-monophosphate (CMP). This chain is 2-C-methyl-D-erythritol 2,4-cyclodiphosphate synthase, found in Yersinia pseudotuberculosis serotype O:1b (strain IP 31758).